Consider the following 376-residue polypeptide: Queuine tRNA-ribosyltransferase (376 aa).

Catalysis depends on D89, which acts as the Proton acceptor. Substrate contacts are provided by residues D89–F93, D143, Q194, and G221. The interval G252–N258 is RNA binding. Residue D271 is the Nucleophile of the active site. The segment at A276–R280 is RNA binding; important for wobble base 34 recognition. Zn(2+) contacts are provided by C309, C311, C314, and H340.

It belongs to the queuine tRNA-ribosyltransferase family. Homodimer. Within each dimer, one monomer is responsible for RNA recognition and catalysis, while the other monomer binds to the replacement base PreQ1. The cofactor is Zn(2+).

It carries out the reaction 7-aminomethyl-7-carbaguanine + guanosine(34) in tRNA = 7-aminomethyl-7-carbaguanosine(34) in tRNA + guanine. Its pathway is tRNA modification; tRNA-queuosine biosynthesis. In terms of biological role, catalyzes the base-exchange of a guanine (G) residue with the queuine precursor 7-aminomethyl-7-deazaguanine (PreQ1) at position 34 (anticodon wobble position) in tRNAs with GU(N) anticodons (tRNA-Asp, -Asn, -His and -Tyr). Catalysis occurs through a double-displacement mechanism. The nucleophile active site attacks the C1' of nucleotide 34 to detach the guanine base from the RNA, forming a covalent enzyme-RNA intermediate. The proton acceptor active site deprotonates the incoming PreQ1, allowing a nucleophilic attack on the C1' of the ribose to form the product. After dissociation, two additional enzymatic reactions on the tRNA convert PreQ1 to queuine (Q), resulting in the hypermodified nucleoside queuosine (7-(((4,5-cis-dihydroxy-2-cyclopenten-1-yl)amino)methyl)-7-deazaguanosine). This is Queuine tRNA-ribosyltransferase from Clostridium botulinum (strain Okra / Type B1).